A 343-amino-acid chain; its full sequence is Putative adenosine/adenine deaminase (343 aa).

Residues histidine 16, histidine 18, and histidine 204 each contribute to the Zn(2+) site. Histidine 18 lines the substrate pocket. The active-site Proton donor is the glutamate 207. Aspartate 285 provides a ligand contact to Zn(2+). Position 286 (aspartate 286) interacts with substrate.

The protein belongs to the metallo-dependent hydrolases superfamily. Adenosine and AMP deaminases family. The cofactor is Zn(2+).

Its function is as follows. Putative nucleoside deaminase. May catalyze the hydrolytic deamination of adenosine or some similar substrate and play a role in purine metabolism. The protein is Putative adenosine/adenine deaminase of Streptomyces coelicolor (strain ATCC BAA-471 / A3(2) / M145).